A 325-amino-acid polypeptide reads, in one-letter code: Melanocortin receptor 5 (325 aa).

Residues 1–37 (MNSSFHLHFLDLGLNATEGNLSGLSVRNASSPCEDMG) lie on the Extracellular side of the membrane. Asn2, Asn15, Asn20, and Asn28 each carry an N-linked (GlcNAc...) asparagine glycan. Residues 38–61 (IAVEVFLALGLISLLENILVIGAI) traverse the membrane as a helical segment. The Cytoplasmic segment spans residues 62-73 (VRNRNLHIPMYF). The chain crosses the membrane as a helical span at residues 74–97 (FVGSLAVADMLVSLSNFWETITIY). Residues 98 to 114 (LLTNKHLVMADASVRHL) are Extracellular-facing. The chain crosses the membrane as a helical span at residues 115 to 138 (DNVFDSMICISVVASMCSLLAIAV). Over 139–155 (DRYVTIFCRLRYQRIMT) the chain is Cytoplasmic. Residues 156–179 (GRRSGAIIAGIWAFCTSCGTVFIV) traverse the membrane as a helical segment. Over 180–186 (YYESTYV) the chain is Extracellular. A helical transmembrane segment spans residues 187–211 (VVCLIAMFLTMLLLMASLYTHMFLL). Topologically, residues 212–239 (ARTHVRRIAALPGHSSVRQRTGVKGAIT) are cytoplasmic. The helical transmembrane segment at 240-265 (LAMLLGVFIICWAPFFLHLILMISCP) threads the bilayer. Over 266–273 (QNLYCSCF) the chain is Extracellular. Residues 274–297 (MSHFNMYLILIMCNSVIDPLIYAF) form a helical membrane-spanning segment. Residues 298–325 (RSQEMRKTFKEIVCFQGFRTPCRFPSTY) lie on the Cytoplasmic side of the membrane. Cys311 carries the S-palmitoyl cysteine lipid modification.

This sequence belongs to the G-protein coupled receptor 1 family.

The protein resides in the cell membrane. Functionally, receptor for MSH (alpha, beta and gamma) and ACTH. The activity of this receptor is mediated by G proteins which activate adenylate cyclase. This receptor is a possible mediator of the immunomodulation properties of melanocortins. The sequence is that of Melanocortin receptor 5 (MC5R) from Ovis aries (Sheep).